Consider the following 270-residue polypeptide: Acyl-[acyl-carrier-protein]--UDP-N-acetylglucosamine O-acyltransferase (270 aa).

This sequence belongs to the transferase hexapeptide repeat family. LpxA subfamily. As to quaternary structure, homotrimer.

Its subcellular location is the cytoplasm. It catalyses the reaction a (3R)-hydroxyacyl-[ACP] + UDP-N-acetyl-alpha-D-glucosamine = a UDP-3-O-[(3R)-3-hydroxyacyl]-N-acetyl-alpha-D-glucosamine + holo-[ACP]. Its pathway is glycolipid biosynthesis; lipid IV(A) biosynthesis; lipid IV(A) from (3R)-3-hydroxytetradecanoyl-[acyl-carrier-protein] and UDP-N-acetyl-alpha-D-glucosamine: step 1/6. Involved in the biosynthesis of lipid A, a phosphorylated glycolipid that anchors the lipopolysaccharide to the outer membrane of the cell. The sequence is that of Acyl-[acyl-carrier-protein]--UDP-N-acetylglucosamine O-acyltransferase from Sinorhizobium fredii (strain NBRC 101917 / NGR234).